A 135-amino-acid polypeptide reads, in one-letter code: Small ribosomal subunit protein uS9 (135 aa).

This sequence belongs to the universal ribosomal protein uS9 family.

This chain is Small ribosomal subunit protein uS9, found in Petrotoga mobilis (strain DSM 10674 / SJ95).